We begin with the raw amino-acid sequence, 461 residues long: Putative transcription initiation factor IIB-like protein (461 aa).

The disordered stretch occupies residues 113–142 (SESLENIQSENSENNDNFTDNNTKKSPTKS). Residues 121-137 (SENSENNDNFTDNNTKK) are compositionally biased toward low complexity. The segment at 141 to 173 (KSRICSGCGSKGTLLEDQSSSVLVCSECGMIND) adopts a TFIIB-type zinc-finger fold. Zn(2+)-binding residues include Cys-145, Cys-165, and Cys-168. 2 consecutive repeat copies span residues 246–327 (ISTI…EKKV) and 360–430 (IRRH…DVTI).

It belongs to the TFIIB family.

The polypeptide is Putative transcription initiation factor IIB-like protein (Acanthamoeba polyphaga mimivirus (APMV)).